A 265-amino-acid polypeptide reads, in one-letter code: PBSX phage terminase small subunit (265 aa).

The interval Lys241 to Ser265 is disordered.

To B.subtilis YqaS and B.subtilis phage SPP1 terminase small subunit. Dimer of a small and a large subunit.

Functions as a terminase. This Bacillus subtilis (strain 168) protein is PBSX phage terminase small subunit (xtmA).